The chain runs to 227 residues: Ion-translocating oxidoreductase complex subunit E (227 aa).

5 helical membrane passes run 34 to 56, 68 to 88, 91 to 111, 127 to 147, and 181 to 201; these read AINAIGLGMTTTLVLTITNTIIS, IPIYMMIISSVVTSIEMLLHA, FNLYQSLGIFIPLIVTNCIIV, FFDGIFIGLGSMFAMFAVGSI, and TIILAVFPPGGFLILGFLIAI.

Belongs to the NqrDE/RnfAE family. As to quaternary structure, the complex is composed of six subunits: RnfA, RnfB, RnfC, RnfD, RnfE and RnfG.

It localises to the cell inner membrane. Functionally, part of a membrane-bound complex that couples electron transfer with translocation of ions across the membrane. This is Ion-translocating oxidoreductase complex subunit E from Buchnera aphidicola subsp. Acyrthosiphon pisum (strain APS) (Acyrthosiphon pisum symbiotic bacterium).